A 164-amino-acid polypeptide reads, in one-letter code: Cyclic pyranopterin monophosphate synthase (164 aa).

Substrate is bound by residues 75–77 (MCH) and 116–117 (ME). Asp131 is a catalytic residue.

Belongs to the MoaC family. In terms of assembly, homohexamer; trimer of dimers.

The enzyme catalyses (8S)-3',8-cyclo-7,8-dihydroguanosine 5'-triphosphate = cyclic pyranopterin phosphate + diphosphate. The protein operates within cofactor biosynthesis; molybdopterin biosynthesis. Catalyzes the conversion of (8S)-3',8-cyclo-7,8-dihydroguanosine 5'-triphosphate to cyclic pyranopterin monophosphate (cPMP). The chain is Cyclic pyranopterin monophosphate synthase from Staphylococcus aureus (strain bovine RF122 / ET3-1).